Consider the following 485-residue polypeptide: NADH-quinone oxidoreductase subunit N (485 aa).

Helical transmembrane passes span 8–28, 35–55, 75–95, 105–125, 127–147, 159–179, 203–223, 235–255, 271–291, 297–317, 326–346, 374–394, 408–430, and 455–475; these read LIAL…MLSI, FLNA…LWFV, LYTG…YPWL, FYLL…ANHL, ALFL…GYAF, YTIL…LVYA, LLAG…LVPF, PAPV…GVVM, VVLG…ALSQ, LLGY…IALQ, VGVY…VVSL, AVMT…GFIG, WWLV…RVAV, and IVVL…QPLI.

It belongs to the complex I subunit 2 family. In terms of assembly, NDH-1 is composed of 13 different subunits. Subunits NuoA, H, J, K, L, M, N constitute the membrane sector of the complex.

It is found in the cell inner membrane. It carries out the reaction a quinone + NADH + 5 H(+)(in) = a quinol + NAD(+) + 4 H(+)(out). Functionally, NDH-1 shuttles electrons from NADH, via FMN and iron-sulfur (Fe-S) centers, to quinones in the respiratory chain. The immediate electron acceptor for the enzyme in this species is believed to be ubiquinone. Couples the redox reaction to proton translocation (for every two electrons transferred, four hydrogen ions are translocated across the cytoplasmic membrane), and thus conserves the redox energy in a proton gradient. This chain is NADH-quinone oxidoreductase subunit N, found in Klebsiella pneumoniae (strain 342).